We begin with the raw amino-acid sequence, 264 residues long: MVWLARDSCVAAVILLLTVLSPPVALVRDPTPRFLEQVKGECHFYNGTQRVRFLARYIYNREEYTRFDSDVGEFRAVTELGRPSAEYYNKQKEYMEQLRATVDTACKHDYEISESFLVPRTVEPKVTVYPSKTQPLEHHNLLVCSVSDFYPGSVEVRWFRNGEEEKDGLVSTGLIRNGDWTFQLLVMLETVPQGGEVYTCQVEHPSLPSPVRVEWKAQSTSAQNKKMSGVGGIVLGLLFLGAGLFVYFRNQKGQSGLQPTGLLN.

An N-terminal signal peptide occupies residues 1–26; that stretch reads MVWLARDSCVAAVILLLTVLSPPVAL. A beta-1 region spans residues 27–120; that stretch reads VRDPTPRFLE…EISESFLVPR (94 aa). The Extracellular portion of the chain corresponds to 27 to 226; it reads VRDPTPRFLE…AQSTSAQNKK (200 aa). 2 disulfides stabilise this stretch: Cys-42–Cys-106 and Cys-144–Cys-200. Residue Asn-46 is glycosylated (N-linked (GlcNAc...) asparagine). The beta-2 stretch occupies residues 121–215; the sequence is TVEPKVTVYP…SLPSPVRVEW (95 aa). The Ig-like C1-type domain occupies 124–228; that stretch reads PKVTVYPSKT…STSAQNKKMS (105 aa). The tract at residues 216–226 is connecting peptide; that stretch reads KAQSTSAQNKK. The chain crosses the membrane as a helical span at residues 227–248; the sequence is MSGVGGIVLGLLFLGAGLFVYF. Topologically, residues 249 to 264 are cytoplasmic; it reads RNQKGQSGLQPTGLLN.

It belongs to the MHC class II family.

Its subcellular location is the membrane. Its function is as follows. Involved in the presentation of foreign antigens to the immune system. This Rattus norvegicus (Rat) protein is Rano class II histocompatibility antigen, D-1 beta chain (RT1-Db1).